A 1826-amino-acid chain; its full sequence is MVGVLSMAAAAAPLPVKDYEIEPCKKRRKDDDNSSCETITKYLSPIGKTGDKVFSPPKPSNILHYFRKTSLTTEKPQSTKAYKIKPSPPLLVGNSKDCKTPLEVFSNREFKRKRKRVSLSSQLNDIKIQDECPVEISNNDSKEDGGLSDCVESSASVSLYKEHVEVLAESIEDSRNQPNTKSSKKKVNPKQCTTKSDDRILRKRKRSKVTGQSESVPLADELSLPEDGGKDSKLTKPSLAEENDSRTHATKRADLKESTITVSYEEFVKSHKAAKVEEIPDPAVPACVPSGPGEAVKSGSEGELSGSCEPSPQLHLKTVTVLAQVHPTPPKKKGKIPPIFLKQKQPELENSLSDPENEQPVQKRKSNVVIQEGQLELAVLEAWNSEASVPKCSMEERQQFMRAFRQPPPDTLKNGFKKPLEKQKDPSEKSVHEGDSSSEKIIENPNIQRVSSQGCLQSHADRGSFPKEKSKKPNKKGKKTRTTAGGNREENIQKEKTAFSLKDEQDQNSLRRSVRQKSEVLKSNALLNSENLVCEDTAHDSVQMSLCNRNKSRSSSTPTRDMVTHHRAEPGSSLEYVSTRQPIRRSLRSCSTPATNALGGTESEDAQDTIPVKASTPKSARTSEKHNLYTAELIIVSSDSESPIRMKFTRISTPKKSKKSSKKSETTEEELTSQKKKANSTSKNISKAKELIEEAKAFQIGGSKTEETVVPLRRSSRHQARSAKEKSPEIDDSVIVIDSSPTSIREPEKSQKKLQNLNDVLGKKLNKSSKNVPGKMKIAPLFLAKRTKRAAIPVFDLDESSQDSSEQTQDCDVQFKAKRDFLMSGLPDLLKRQIAKKAAALDVYNAVSTSFQRVVHVQQKDDEYWLWHLKPPSCPLLTEFKELNTKVTDLSEYVVAFGEFSTLNPNPRSNPAAVMMRTRKDFTKEVRNLLLEEIKCSNPEFSLEKYFPLLLKKRIEHQVLCEGHGKQASPQLQPDVSQKETKRKQVATGNQKSKRKRQNEYSVSPEEMKGRSKDLDERISSSCTNLDPSRDSGTEDMLWTEKYQPQNSNELIGNELAVKKLHSWLKDWKRRAELEERHNLKGKRDEKEEGILDLSDSTDFKGSSDDEENRLCNTVLITGPTGVGKTAAVYACAQELGFKIFEVNASSQRSGRQILSQLKEATQSHQVDKQGVNSQKPCFFNNYNIGKSPKKLNSPGKVVTSPRKLPPSSPKTSGQKRALLPKTLANYFKVSSKSKSNDDVGALMGDDKGVKNSSLEQRQLIQTKSTNANNSHIKDVGAEESNRKKATSLILFEEVDVIFDEDAGFLNAVKTFMATTKRPVILTTSDPTFSLVFDGCFEEINFSIPSLLNVASYLQVICLVENFRTDFKDFVTLLTANACDIRKSILYLQFWIRSGGGILEERPLSHCRENSRNTLVCSEDGSDANINSKKPKRNRVALPRCDTGCAEALFGLKNIASPSQDLLSLLKHKITTKEEWQKLIQVLTEFHVQNIDLLHSNLEVILPLPVHVVPDVRGAYGFPVTTQASAPASMGHLTRKQSKDQPLRKSQKRKQKKMVILDDSDLFDTGLDFSGELPSLSPAPSLSVEDNIRRDSNPEIKTQNSGFKPHSVPQPPKTLAEKKCCMLVSHCLNSLSEFMENMSFIDALLTDPGEQNELGRSAFHWTNGRVKSGLCDEFSLENRDRWAPQSAGELKATAEALSFTECSSTISKALESLNSCKQLERDPTNELTVCVSQRRHDACFRQSAANLDNADKRMAVIKSVFSSRSFLTLGNKQASIIDYLPTLRNICRTEKLKEQEKNKRRFLHYFEGIHLEIPEETITTLAADFP.

Serine 44 is modified (phosphoserine). Residue lysine 127 forms a Glycyl lysine isopeptide (Lys-Gly) (interchain with G-Cter in SUMO2) linkage. Disordered stretches follow at residues serine 170–aspartate 254, proline 282–serine 311, alanine 323–asparagine 367, glutamine 398–serine 572, arginine 588–serine 623, lysine 647–asparagine 684, and valine 709–glutamate 729. Serine 215 bears the Phosphoserine mark. A compositionally biased stretch (basic and acidic residues) spans asparagine 243–aspartate 254. Over residues serine 298–serine 311 the composition is skewed to low complexity. Serine 351 and serine 366 each carry phosphoserine. Residues lysine 365 to glutamate 381 form an interaction with WDR48 region. Positions lysine 418–isoleucine 442 are enriched in basic and acidic residues. Residues proline 445–leucine 456 show a composition bias toward polar residues. Residues histidine 459–glutamate 468 show a composition bias toward basic and acidic residues. Residues lysine 469–arginine 481 are compositionally biased toward basic residues. The segment covering asparagine 487–glutamine 505 has biased composition (basic and acidic residues). The span at aspartate 540–threonine 559 shows a compositional bias: polar residues. A phosphoserine mark is found at serine 591 and serine 603. A phosphoserine mark is found at serine 727 and serine 801. Residues glycine 965–threonine 1034 form a disordered region. Positions glutamate 1006–isoleucine 1019 are enriched in basic and acidic residues. Position 1104 is a phosphoserine (serine 1104). Position 1119–1126 (glycine 1119–threonine 1126) interacts with ATP. The tract at residues tyrosine 1183–lysine 1216 is disordered. The LXCXE motif motif lies at leucine 1415–glutamate 1419. Disordered stretches follow at residues proline 1527–lysine 1552 and serine 1592–proline 1611. The interval proline 1612–glutamate 1701 is interaction with RAD51 and RFC5.

Belongs to the AAA ATPase family. As to quaternary structure, component of a heteropentameric replication factor ATAD5 RFC-like complex composed of one large subunit (ATAD5) and four small subunits (RFC2, RFC3, RFC4 and RFC5). Within the ATAD5 RFC-like complex, interacts with RFC2, RFC4 and RFC5. Within the ATAD5 RFC-like complex, interacts directly via-N terminal with RAD51; the interactions is enhanced under replication stress. Interacts with RB1 predominantly in G1 phase via its LXCXE motif. Interacts with RAD9A in growing cells. The interaction with RAD9A is reduced after exposure to DNA replication-inhibiting agents. Interacts with BRD4. Interacts with PCNA. Interacts with deubiquitinating enzyme USP1, and its associated factor, WDR48. In terms of processing, ATR may stimulate the RAD9A dissociation. Expressed ubiquitously in all cell lines like teratocarcinoma, cell lymphoma, lymphoma.

It is found in the nucleus. Functionally, has an important role in DNA replication and in maintaining genome integrity during replication stress. Involved in a RAD9A-related damage checkpoint, a pathway that is important in determining whether DNA damage is compatible with cell survival or whether it requires cell elimination by apoptosis. Modulates the RAD9A interaction with BCL2 and thereby induces DNA damage-induced apoptosis. Promotes PCNA deubiquitination by recruiting the ubiquitin-specific protease 1 (USP1) and WDR48 thereby down-regulating the error-prone damage bypass pathway. As component of the ATAD5 RFC-like complex, regulates the function of the DNA polymerase processivity factor PCNA by unloading the ring-shaped PCNA homotrimer from DNA after replication during the S phase of the cell cycle. This seems to be dependent on its ATPase activity. Plays important roles in restarting stalled replication forks under replication stress, by unloading the PCNA homotrimer from DNA and recruiting RAD51 possibly through an ATR-dependent manner. Ultimately this enables replication fork regression, breakage, and eventual fork restart. Both the PCNA unloading activity and the interaction with WDR48 are required to efficiently recruit RAD51 to stalled replication forks. Promotes the generation of MUS81-mediated single-stranded DNA-associated breaks in response to replication stress, which is an alternative pathway to restart stalled/regressed replication forks. In Mus musculus (Mouse), this protein is ATPase family AAA domain-containing protein 5 (Atad5).